The following is a 275-amino-acid chain: MSTYLIGDIHGCYRELRALLTKANFDPTKDTLWLTGDLVARGPDSLKVLRYVKQLGSAARMVLGNHDLHLLGVYAGISRNKPKDKIDTLLSAPDADELINWLRKQPLLQFDDDLKLLMTHAGITPQWDLETAKMCASEVETMFNSSCYPLFLNSMYGDMPNNWSPELSGLARLRFSTNALTRMRYCFPNGQLDMLCKDKPENAPAPLKPWFELERQIPPEYAIVFGHWASLEGQGTPDSFYALDTGCCWGGQLTMLRWEDKQYFTQSSLPAVKQH.

It belongs to the Ap4A hydrolase family.

The catalysed reaction is P(1),P(4)-bis(5'-adenosyl) tetraphosphate + H2O = 2 ADP + 2 H(+). Its function is as follows. Hydrolyzes diadenosine 5',5'''-P1,P4-tetraphosphate to yield ADP. The chain is Bis(5'-nucleosyl)-tetraphosphatase, symmetrical from Photorhabdus laumondii subsp. laumondii (strain DSM 15139 / CIP 105565 / TT01) (Photorhabdus luminescens subsp. laumondii).